A 681-amino-acid chain; its full sequence is Kojibiose hydrolase (681 aa).

An N-terminal signal peptide occupies residues 1-23 (MKKYIFNHVFFFLMLCGSNYLYS). Beta-D-glucose contacts are provided by R74, W343, D344, W391, E392, T407, E472, W473, K538, Q539, and D573. The Proton donor role is filled by E472. The Proton acceptor role is filled by E616.

This sequence belongs to the glycosyl hydrolase 65 family. Homohexamer; dimer of trimers.

It is found in the periplasm. The enzyme catalyses kojibiose + H2O = beta-D-glucose + D-glucose. Functionally, glycosidase that specifically hydrolyzes kojibiose to beta-glucose and glucose. Also hydrolyzes, with lower catalytic efficiency, longer kojioligosaccharides (from kojitriose to kojipentaose) and shorter oligosaccharides produced by the degradation of dextran-containing alpha-1,2 branches. Probably acts on alpha-(1-&gt;2)-glucosyl isomaltooligosaccharides. Shows weak activity with nigerose but has no activity toward p-nitrophenyl alpha-glucopyranoside, which is a general substrate of exo-acting alpha-glucoside hydrolases. Has a strict specificity for alpha-1,2-glucosidic linkages. Catalyzes the hydrolytic reaction via an anomer-inverting mechanism. This Flavobacterium johnsoniae (strain ATCC 17061 / DSM 2064 / JCM 8514 / BCRC 14874 / CCUG 350202 / NBRC 14942 / NCIMB 11054 / UW101) (Cytophaga johnsonae) protein is Kojibiose hydrolase.